A 799-amino-acid polypeptide reads, in one-letter code: Ribosome-releasing factor 2, mitochondrial (799 aa).

The region spanning 19–306 (SKIRNIGIIA…AVVNYLPSPL (288 aa)) is the tr-type G domain. GTP is bound by residues 28 to 35 (AHIDAGKT), 93 to 97 (DTPGH), and 145 to 148 (NKMD).

Belongs to the TRAFAC class translation factor GTPase superfamily. Classic translation factor GTPase family. EF-G/EF-2 subfamily.

It localises to the mitochondrion. In terms of biological role, mitochondrial GTPase that mediates the disassembly of ribosomes from messenger RNA at the termination of mitochondrial protein biosynthesis. Not involved in the GTP-dependent ribosomal translocation step during translation elongation. This is Ribosome-releasing factor 2, mitochondrial from Vanderwaltozyma polyspora (strain ATCC 22028 / DSM 70294 / BCRC 21397 / CBS 2163 / NBRC 10782 / NRRL Y-8283 / UCD 57-17) (Kluyveromyces polysporus).